Here is a 683-residue protein sequence, read N- to C-terminus: Multidrug resistance protein MdtO (683 aa).

Helical transmembrane passes span 43–63 (VILI…AVLF), 75–95 (FVAI…FLIY), 100–120 (GEPL…MFLM), 125–145 (LGLV…FPAM), 158–178 (WCIV…VLWF), 402–422 (FGGA…VMPW), 426–446 (IVEL…IATS), 457–477 (MVVT…YDLV), and 483–503 (ALGI…VWPE).

The protein belongs to the MdtO family. As to quaternary structure, could be part of a tripartite efflux system composed of MdtN, MdtO and MdtP.

The protein resides in the cell inner membrane. Could be involved in resistance to puromycin, acriflavine and tetraphenylarsonium chloride. This chain is Multidrug resistance protein MdtO (mdtO), found in Escherichia coli O157:H7.